Reading from the N-terminus, the 495-residue chain is Ribitol 5-phosphate transferase FKRP (495 aa).

The Cytoplasmic segment spans residues 1–6 (MRLTRC). A helical transmembrane segment spans residues 7–29 (QAALAAAITLNLLVLFYVSWLQH). Residues 30–495 (QPRNSRARGP…PALLSLTGSG (466 aa)) are Lumenal-facing. Cysteines 168 and 191 form a disulfide. N-linked (GlcNAc...) asparagine glycosylation is found at N172 and N209. Zn(2+) contacts are provided by C289, C296, C317, and C318. The tract at residues 289–318 (CNKETTRCFGTVVGDTPAYLYEERWTPPCC) is zinc finger loop. Residues G345, R352, 359-364 (WDYDVD), 437-438 (QD), and 480-482 (NPQ) each bind CDP-L-ribitol. Positions 360, 362, and 364 each coordinate Mg(2+).

The protein belongs to the LicD transferase family. In terms of assembly, homodimer; disulfide-linked. Tetramer. Forms a complex composed of FKRP, FKTN/fukutin, and RXYLT1/TMEM5. Also exists as large multimeric protein complexes. May interact with the dystrophin-glycoprotein complex (DGC). Mg(2+) is required as a cofactor. Post-translationally, N-glycosylated. As to expression, expressed in the retina (at protein level). Expressed predominantly in skeletal muscle, placenta, and heart and relatively weakly in brain, lung, liver, kidney, and pancreas.

The protein resides in the golgi apparatus membrane. Its subcellular location is the secreted. The protein localises to the cell membrane. It localises to the sarcolemma. It is found in the rough endoplasmic reticulum. The protein resides in the cytoplasm. The catalysed reaction is 3-O-[Rib-ol-P-3-beta-D-GalNAc-(1-&gt;3)-beta-D-GlcNAc-(1-&gt;4)-(O-6-P-alpha-D-Man)]-Thr-[protein] + CDP-L-ribitol = 3-O-[Rib-ol-P-Rib-ol-P-3-beta-D-GalNAc-(1-&gt;3)-beta-D-GlcNAc-(1-&gt;4)-(O-6-P-alpha-D-Man)]-Thr-[protein] + CMP + H(+). Its pathway is protein modification; protein glycosylation. Catalyzes the transfer of a ribitol 5-phosphate from CDP-L-ribitol to the ribitol 5-phosphate previously attached by FKTN/fukutin to the phosphorylated O-mannosyl trisaccharide (N-acetylgalactosamine-beta-3-N-acetylglucosamine-beta-4-(phosphate-6-)mannose), a carbohydrate structure present in alpha-dystroglycan (DAG1). This constitutes the second step in the formation of the ribose 5-phosphate tandem repeat which links the phosphorylated O-mannosyl trisaccharide to the ligand binding moiety composed of repeats of 3-xylosyl-alpha-1,3-glucuronic acid-beta-1. The sequence is that of Ribitol 5-phosphate transferase FKRP from Homo sapiens (Human).